The primary structure comprises 468 residues: ATP synthase subunit beta (468 aa).

155–162 serves as a coordination point for ATP; that stretch reads GGAGVGKT.

The protein belongs to the ATPase alpha/beta chains family. F-type ATPases have 2 components, CF(1) - the catalytic core - and CF(0) - the membrane proton channel. CF(1) has five subunits: alpha(3), beta(3), gamma(1), delta(1), epsilon(1). CF(0) has three main subunits: a(1), b(2) and c(9-12). The alpha and beta chains form an alternating ring which encloses part of the gamma chain. CF(1) is attached to CF(0) by a central stalk formed by the gamma and epsilon chains, while a peripheral stalk is formed by the delta and b chains.

Its subcellular location is the cell membrane. The enzyme catalyses ATP + H2O + 4 H(+)(in) = ADP + phosphate + 5 H(+)(out). Produces ATP from ADP in the presence of a proton gradient across the membrane. The catalytic sites are hosted primarily by the beta subunits. This Streptococcus suis (strain 98HAH33) protein is ATP synthase subunit beta.